The chain runs to 243 residues: MRTPMNNDISGRPDSLNGDRSDVFSPELGEFPNADDRANDIGDMETKTGTTTVGLKTQDGTVLATDMRASLGRMVSSKDVQKVEEIHPTGALTIAGSVSAAQSLISSIRAEVRLYEARRGEDMSMEALSTLLGNFLRSGGFFIVQPILGGVDDDGPHIYSIDPAGSIIEEEYTVTGSGSQYALGVLEQQYNEDLSIEEAKTVAARSIESAVERDLASGNGINVCVVTEDGVEITQHEDFEELV.

Positions 1–40 (MRTPMNNDISGRPDSLNGDRSDVFSPELGEFPNADDRAND) are disordered. Residues 1-49 (MRTPMNNDISGRPDSLNGDRSDVFSPELGEFPNADDRANDIGDMETKTG) constitute a propeptide, removed in mature form; by autocatalysis. Catalysis depends on threonine 50, which acts as the Nucleophile.

It belongs to the peptidase T1B family. As to quaternary structure, the 20S proteasome core is composed of 14 alpha and 14 beta subunits that assemble into four stacked heptameric rings, resulting in a barrel-shaped structure. The two inner rings, each composed of seven catalytic beta subunits, are sandwiched by two outer rings, each composed of seven alpha subunits. The catalytic chamber with the active sites is on the inside of the barrel. Has a gated structure, the ends of the cylinder being occluded by the N-termini of the alpha-subunits. Is capped at one or both ends by the proteasome regulatory ATPase, PAN.

It localises to the cytoplasm. It catalyses the reaction Cleavage of peptide bonds with very broad specificity.. The formation of the proteasomal ATPase PAN-20S proteasome complex, via the docking of the C-termini of PAN into the intersubunit pockets in the alpha-rings, triggers opening of the gate for substrate entry. Interconversion between the open-gate and close-gate conformations leads to a dynamic regulation of the 20S proteasome proteolysis activity. Functionally, component of the proteasome core, a large protease complex with broad specificity involved in protein degradation. The sequence is that of Proteasome subunit beta from Haloquadratum walsbyi (strain DSM 16790 / HBSQ001).